Reading from the N-terminus, the 151-residue chain is Ribosome maturation factor RimP (151 aa).

This sequence belongs to the RimP family.

The protein resides in the cytoplasm. Its function is as follows. Required for maturation of 30S ribosomal subunits. In Endomicrobium trichonymphae, this protein is Ribosome maturation factor RimP.